The sequence spans 856 residues: Villin-like protein (856 aa).

6 Gelsolin-like repeats span residues 22 to 74 (RKMV…EAQG), 146 to 186 (VSAT…SEKA), 263 to 307 (LVVL…QERK), 401 to 450 (LHRQ…DEIE), 521 to 561 (TRTM…DQRE), and 624 to 665 (LVLA…WKEA). The disordered stretch occupies residues 762–796 (SQDSSENDLVRSPKSAGSRTSSSVSSTSATINGGL). The segment covering 776-791 (SAGSRTSSSVSSTSAT) has biased composition (low complexity). In terms of domain architecture, HP spans 790–856 (ATINGGLRRE…RQEKKQLGFF (67 aa)).

The protein belongs to the villin/gelsolin family. In terms of tissue distribution, ubiquitously expressed in 16 tissues examined.

Functionally, possible tumor suppressor. In Homo sapiens (Human), this protein is Villin-like protein (VILL).